Reading from the N-terminus, the 131-residue chain is Small ribosomal subunit protein uS8 (131 aa).

This sequence belongs to the universal ribosomal protein uS8 family. In terms of assembly, part of the 30S ribosomal subunit. Contacts proteins S5 and S12.

One of the primary rRNA binding proteins, it binds directly to 16S rRNA central domain where it helps coordinate assembly of the platform of the 30S subunit. The sequence is that of Small ribosomal subunit protein uS8 from Malacoplasma penetrans (strain HF-2) (Mycoplasma penetrans).